A 504-amino-acid polypeptide reads, in one-letter code: uncharacterized protein (504 aa).

Residues 26–46 (ILFLLLGLIILVNISINVTTV) form a helical membrane-spanning segment. Polar residues predominate over residues 103–112 (PTQCSSSSTH). 3 disordered regions span residues 103 to 180 (PTQC…TRPM), 313 to 402 (YDAR…PLTT), and 431 to 504 (QRLA…GKLN). The segment covering 113–128 (YFRKHSNDRRSRRRYC) has biased composition (basic residues). Over residues 135–147 (QIRQSNQQQSCHS) the composition is skewed to polar residues. Residues 313–324 (YDARDQWRRGTE) show a composition bias toward basic and acidic residues. A compositionally biased stretch (polar residues) spans 349-377 (SSQAHRQNFPSYTHSQPNHSPPQSVGYSS). 2 stretches are compositionally biased toward basic and acidic residues: residues 378 to 389 (RESHEVRRRAPD) and 467 to 478 (LELKRQVQENRG). Positions 494-504 (SLHRSRTGKLN) are enriched in basic residues.

It is found in the membrane. This is an uncharacterized protein from Rattus norvegicus (Rat).